We begin with the raw amino-acid sequence, 477 residues long: Cytochrome P450 708A2 (477 aa).

A helical membrane pass occupies residues 3-23 (FVWSAAVWVIAVAAVVISKWL). Cys426 contacts heme.

The protein belongs to the cytochrome P450 family. The cofactor is heme. As to expression, expressed primarily in the root epidermis.

The protein resides in the membrane. Functionally, hydroxylates thalianol into thalian-diol. The polypeptide is Cytochrome P450 708A2 (CYP708A2) (Arabidopsis thaliana (Mouse-ear cress)).